A 1094-amino-acid chain; its full sequence is Probable arabinosyltransferase C (1094 aa).

The next 13 helical transmembrane spans lie at 28-50 (IARY…TPLL), 232-251 (AAMI…LHIL), 264-286 (PARW…WWHF), 341-360 (SIWM…WVIS), 373-392 (TSRA…WLPL), 431-453 (IGAL…LVAI), 466-488 (RFGV…IPIF), 530-552 (SIAR…AMSL), 565-582 (SRRI…MMFT), 586-608 (WTHH…AVAV), 620-642 (TVFA…GWWY), 657-679 (WRWS…AAWF), and 700-722 (LAGI…EVVS). Low complexity predominate over residues 817 to 831 (GSEPGTEGGTTAAPG). Residues 817–836 (GSEPGTEGGTTAAPGINGSR) are disordered.

Belongs to the emb family.

Its subcellular location is the cell membrane. Functionally, arabinosyl transferase responsible for the polymerization of arabinose into the arabinan of arabinogalactan. This is Probable arabinosyltransferase C (embC) from Mycobacterium tuberculosis (strain ATCC 25618 / H37Rv).